The primary structure comprises 303 residues: MITIFNKLKQSLSKTSNTISAGIDKIFYKRKLDKETLNELEELLISSDISISVVTHIIEEFKNVKFDKTIDSDTVKEAIAKLIEQQLSKSEIPFTLSENKLNIILVCGVNGVGKTTTIGKLSALYSAEGKKVAVAACDTFRAAAINQLSSWVHRANALLITGKASADPASVAYRAIEESIKQNIDILFIDTAGRLHNNKNLMDELSKIVKVIKKLDENAPTHSILIIDAITGQNTYNQIEYFNDVTNLTGLIVTKLDGSAKAGVLVGAVQKFNLPVYFIGIGEKIEDLKIFNRHDFSRSLVGL.

GTP is bound by residues 108–115 (GVNGVGKT), 190–194 (DTAGR), and 254–257 (TKLD).

The protein belongs to the GTP-binding SRP family. FtsY subfamily. In terms of assembly, part of the signal recognition particle protein translocation system, which is composed of SRP and FtsY. SRP is a ribonucleoprotein composed of Ffh and a 4.5S RNA molecule.

Its subcellular location is the cell inner membrane. It is found in the cytoplasm. It catalyses the reaction GTP + H2O = GDP + phosphate + H(+). In terms of biological role, involved in targeting and insertion of nascent membrane proteins into the cytoplasmic membrane. Acts as a receptor for the complex formed by the signal recognition particle (SRP) and the ribosome-nascent chain (RNC). Interaction with SRP-RNC leads to the transfer of the RNC complex to the Sec translocase for insertion into the membrane, the hydrolysis of GTP by both Ffh and FtsY, and the dissociation of the SRP-FtsY complex into the individual components. The protein is Signal recognition particle receptor FtsY of Rickettsia prowazekii (strain Madrid E).